The following is a 305-amino-acid chain: Probable DNA-invertase y4cG (305 aa).

One can recognise a Resolvase/invertase-type recombinase catalytic domain in the interval 15-148; it reads RLIGYARVST…SGMQAAKARG (134 aa). Ser23 functions as the O-(5'-phospho-DNA)-serine intermediate in the catalytic mechanism.

This sequence belongs to the site-specific recombinase resolvase family.

This is Probable DNA-invertase y4cG from Sinorhizobium fredii (strain NBRC 101917 / NGR234).